A 456-amino-acid polypeptide reads, in one-letter code: Exodeoxyribonuclease 7 large subunit (456 aa).

Residues 1 to 103 form a binds ssDNA, also required to bind the small subunit region; it reads MLPSQSPAIF…DYQIIVESMQ (103 aa).

The protein belongs to the XseA family. As to quaternary structure, heterooligomer composed of two different subunits with an approximate ratio of 4:1 for small to large subunit. Also estimated to have a 6:1 ration for small to large subunits. Does not require a metal cofactor. serves as cofactor.

The protein localises to the cytoplasm. It catalyses the reaction Exonucleolytic cleavage in either 5'- to 3'- or 3'- to 5'-direction to yield nucleoside 5'-phosphates.. Functionally, bidirectionally degrades single-stranded DNA into large acid-insoluble oligonucleotides, which are then degraded further into small acid-soluble oligonucleotides. It can degrade 3' or 5' ss regions extending from the termini of duplex DNA molecules and displaced ss regions. It can also excise thymine dimers in vitro. ssDNA-binding requires both subunits. Required for production of the mature 5'-end of retron Ec78 or Ec83 msDNA. Overproduction of this subunit in the absence of an equivalent quantity of the small subunit is toxic, causing cell elongation and chromosome fragmentation or loss; its toxicity is mostly suppressed by RecA. The polypeptide is Exodeoxyribonuclease 7 large subunit (Escherichia coli (strain K12)).